We begin with the raw amino-acid sequence, 117 residues long: uncharacterized protein (117 aa).

4 consecutive transmembrane segments (helical) span residues 3–23 (AVPI…NILL), 40–60 (FLTP…LLFA), 66–86 (LEVS…LIIA), and 94–114 (PFHL…IFLA).

The protein to E.coli and S.aureus ethidium bromide resistance proteins (ebr/QacC/EmrE/MvrC).

It localises to the cell membrane. This is an uncharacterized protein from Sinorhizobium fredii (strain NBRC 101917 / NGR234).